A 494-amino-acid chain; its full sequence is Syntaphilin (494 aa).

The disordered stretch occupies residues 1–75 (MAMSLPGSRR…GIKPPTPEQY (75 aa)). The segment covering 7–49 (GSRRTSAGSRRRTSPPVSVRDAYGTSSLSSSSNSGSYKGSDSS) has biased composition (low complexity). Positions 79–161 (LQQKEVCIRH…VKNNLIDKDK (83 aa)) form a coiled coil. Disordered stretches follow at residues 191–246 (MAKE…SGFA) and 338–398 (CGTD…GQSV). Residues Ser-200 and Ser-204 each carry the phosphoserine modification. The segment covering 207–217 (RSLTRSSTYTK) has biased composition (polar residues). A Phosphothreonine modification is found at Thr-214. Ser-219 carries the phosphoserine modification. Positions 230–246 (GDPSSGSAEDGADSGFA) are enriched in low complexity. The span at 344–353 (SGDRCPELDA) shows a compositional bias: basic and acidic residues. Residues 425–444 (YIVDLLAVVVPAVPTVAWLC) form a helical membrane-spanning segment.

In terms of assembly, binds to STX1A. Interacts with DNM1; this interaction inhibits the binding of DNM1 to AMPH and DNM1-receptor-mediated endocytosis. As to expression, brain specific. Found in synapses.

It is found in the membrane. The protein localises to the synapse. Its subcellular location is the synaptosome. Its function is as follows. Inhibits SNARE complex formation by absorbing free STX1A. This Homo sapiens (Human) protein is Syntaphilin.